Here is a 422-residue protein sequence, read N- to C-terminus: Ubiquitin-conjugating enzyme E2 Q1 (422 aa).

Position 1 is an N-acetylmethionine (Met1). Residues 1–24 (MQQPQPQGQQQPGPGQQLGVQGAA) are compositionally biased toward low complexity. Disordered stretches follow at residues 1–40 (MQQP…PGPC) and 173–221 (QPLP…EDDG). Gly residues predominate over residues 25 to 35 (PGAGGGPGGGP). The span at 185–200 (VSSEDEDEEMPEDTED) shows a compositional bias: acidic residues. The segment covering 212–221 (AEGKKSEDDG) has biased composition (basic and acidic residues). Positions 251–415 (QATDRLMKEL…VQIHEKNGWY (165 aa)) constitute a UBC core domain. The active-site Glycyl thioester intermediate is Cys351.

It belongs to the ubiquitin-conjugating enzyme family. Monomer and homodimer. Only the homodimer is linked to ubiquitin through thiolester activation. Interacts (via N-terminus) with B4GALT1 (via N-terminal cytoplasmic domain); the interaction is direct. Autoubiquitinated in vitro in the presence of NEDD4L. In terms of tissue distribution, expressed in liver, brain, heart, spleen, lung, kidney, muscle, ovary, epididymis, testis and placenta. Also expressed in thymus and ES cells. Only expressed in the uterus during pregnancy. Expressed in oocytes and during subsequent embryonic development stages (4-cell stage, blastocyst, 8.5 dpc, 13.5 dpc, 16.5 dpc and 18.5 dpc).

It localises to the nucleus. It is found in the cell projection. Its subcellular location is the filopodium. The protein resides in the cytoplasm. The protein localises to the cytosol. The catalysed reaction is S-ubiquitinyl-[E1 ubiquitin-activating enzyme]-L-cysteine + [E2 ubiquitin-conjugating enzyme]-L-cysteine = [E1 ubiquitin-activating enzyme]-L-cysteine + S-ubiquitinyl-[E2 ubiquitin-conjugating enzyme]-L-cysteine.. The protein operates within protein modification; protein ubiquitination. Catalyzes the covalent attachment of ubiquitin to other proteins. Involved in female fertility and embryo implantation. May be involved in hormonal homeostasis in females. Involved in regulation of B4GALT1 cell surface expression, B4GALT1-mediated cell adhesion to laminin and embryoid body formation. The sequence is that of Ubiquitin-conjugating enzyme E2 Q1 (Ube2q1) from Mus musculus (Mouse).